A 96-amino-acid chain; its full sequence is uncharacterized protein (96 aa).

The N-terminal stretch at 1-19 is a signal peptide; it reads MKFLSALLLIVLLISVVFG. N-linked (GlcNAc...) asparagine glycosylation occurs at Asn20. Over residues 27–46 the composition is skewed to low complexity; that stretch reads AWATTTTGGTTGSQTSPATH. The disordered stretch occupies residues 27-58; it reads AWATTTTGGTTGSQTSPATHGGHGGNGGNGHS. Positions 47–56 are enriched in gly residues; it reads GGHGGNGGNG.

It is found in the secreted. This is an uncharacterized protein from Dictyostelium discoideum (Social amoeba).